Reading from the N-terminus, the 783-residue chain is BMP/retinoic acid-inducible neural-specific protein 2 (783 aa).

The signal sequence occupies residues 1-33 (MRWQCGTRFRGLRPAVAPWTALLALGLPGWVLA). The region spanning 85–281 (RYRIYREFAR…FVAAALSYIT (197 aa)) is the MACPF domain. Residues Asn185, Asn354, Asn473, Asn579, Asn626, and Asn658 are each glycosylated (N-linked (GlcNAc...) asparagine).

The protein belongs to the BRINP family.

It localises to the secreted. Functionally, inhibits neuronal cell proliferation by negative regulation of the cell cycle transition. This chain is BMP/retinoic acid-inducible neural-specific protein 2 (BRINP2), found in Homo sapiens (Human).